The primary structure comprises 172 residues: MTTNLADLIRNIPDFPIPGIQFKDITPLLQNGAAFKEVIDTLAARYEGRALDAIVGIESRGFIFSAPLAYRLGVGMIPIRKPGKLPWETFAVEYDLEYGTNKLEMHRDALAPGARVVVIDDVLATGGTVAAACQMVEMAGAVVEEVAFLIELTFLKGRERLAKYPFFSMIQY.

This sequence belongs to the purine/pyrimidine phosphoribosyltransferase family. In terms of assembly, homodimer.

The protein resides in the cytoplasm. It carries out the reaction AMP + diphosphate = 5-phospho-alpha-D-ribose 1-diphosphate + adenine. Its pathway is purine metabolism; AMP biosynthesis via salvage pathway; AMP from adenine: step 1/1. In terms of biological role, catalyzes a salvage reaction resulting in the formation of AMP, that is energically less costly than de novo synthesis. In Roseiflexus sp. (strain RS-1), this protein is Adenine phosphoribosyltransferase.